The sequence spans 341 residues: Short chain dehydrogenase virL (341 aa).

6 residues coordinate NADP(+): L49, K74, D97, N123, Y210, and K214. The active-site Proton donor is Y210. The Lowers pKa of active site Tyr role is filled by K214.

It belongs to the short-chain dehydrogenases/reductases (SDR) family.

Its pathway is secondary metabolite biosynthesis. In terms of biological role, short chain dehydrogenase; part of the gene cluster that mediates the biosynthesis of virensols and trichoxide, fungal natural products that contain or are derived from a salicylaldehyde core. The pathway begins with the synthesis of the reduced chain in virensol C by the highly reducing polyketide synthase virA via condensation of one acetate and 8 malonate units. VirA has interesting programming rules since the first 2 ketides are fully reduced, the 3 following ketides undergo beta-dehydration, and the last 3 ketides are only reduced to beta-hydroxys to yield the trihydroxy portion. The production of aldehyde virensol C by virA alone is surprising, since virA does not contain a reductase (R) domain that is typically associated with reductive product release in HRPKS. The cupin-domain enzyme virC is involved in enhancing virA product turnover. The short-chain dehydrogenase virB then oxidizes the C-7 alcohol of virensol C to a ketone, yielding virensol D. Virensol D is further transformed to salicylaldehyde 5-deoxyaurocitrin by the short-chain dehydrogenase virD. VirD catalyzes the dehydrogenation of C-3 to form the beta-ketone aldehyde, which is followed by the generation of the nucleophilic C-2 that is required for the intramolecular aldol condensation between C-2 and C-7, itself followed by dehydration and aromatization which leads to salicylaldehyde 5-deoxyaurocitrin. While the dehydrogenation of virensol D is definitely catalyzed by virD, the aldol condensation and dehydration may be uncatalyzed or assisted by virD. The short chain dehydrogenase virG then converts salicylaldehyde 5-deoxyaurocitrin into virensol B which is further hydroxylated by the cytochrome P450 monooxygenase virE to yield the hydroquinone virensol A. VirI then may oxidize virensol A to form the quinone, while virH performs the epoxidation. Finally, the two remaining short-chain dehydrogenases, virK and virL, are probably responsible for reducing the ketones to the corresponding alcohols to furnish the epoxycyclohexanol structure in trichoxide. This is Short chain dehydrogenase virL from Hypocrea virens (strain Gv29-8 / FGSC 10586) (Gliocladium virens).